A 697-amino-acid polypeptide reads, in one-letter code: Tryptophan synthase (697 aa).

The tryptophan synthase alpha chain stretch occupies residues 1-298 (MTEQIKKTFL…AVVEPINEMY (298 aa)). Active-site proton acceptor residues include glutamate 50 and aspartate 61. Positions 298–697 (YLPQKYGMFG…GPKIGWDLRF (400 aa)) are tryptophan synthase beta chain. Lysine 381 is modified (N6-(pyridoxal phosphate)lysine).

This sequence in the N-terminal section; belongs to the TrpA family. The protein in the C-terminal section; belongs to the TrpB family. Pyridoxal 5'-phosphate serves as cofactor.

The enzyme catalyses (1S,2R)-1-C-(indol-3-yl)glycerol 3-phosphate + L-serine = D-glyceraldehyde 3-phosphate + L-tryptophan + H2O. It functions in the pathway amino-acid biosynthesis; L-tryptophan biosynthesis; L-tryptophan from chorismate: step 5/5. This Schizosaccharomyces pombe (strain 972 / ATCC 24843) (Fission yeast) protein is Tryptophan synthase (trp2).